A 642-amino-acid chain; its full sequence is Pentatricopeptide repeat-containing protein At3g16010 (642 aa).

14 PPR repeats span residues D125–S159, S161–P195, T196–F230, D232–P266, T267–P301, T302–P336, D337–P371, T372–P407, S408–P442, C443–N473, S478–P512, D513–A547, D548–P582, and D583–Y617.

The protein belongs to the PPR family. P subfamily.

This is Pentatricopeptide repeat-containing protein At3g16010 from Arabidopsis thaliana (Mouse-ear cress).